The following is a 640-amino-acid chain: MKNKNSEQNTHSTIGEQDIHYFHEGKHIYAYEFMGAHKACEEGIEGIRFTTWAPNAKSICVIGDFNYWQVEDKNYMEPITDAGLWSVFIPNAKNGDKYKFVVTNKDTNHYVYKSDPYAFFSELRPNTASIITTETQYTWSDDKWLEKRAKTNYYDNPMNVYELHLASWKTKNGKFLTYDELSETLPQYIKEMGYTHVEFMPLHEHPLDASWGYQPTGFYSVNSRHGDIIGLKRLVDKLHNNDIGVILDWVPGHFCKDQHGLIYFDGSPCYEYQEPTKAINKGWGTHNFDLGRNEVKCFLISNAMYWINEFHIDGLRVDAVSNILYLNYDREDGQWIPNIYGGHENLEGIAFLKELNGVLKHTCKGVITIAEESSSWPDISTPVEKGGLGFDFKWNMGWMNDTLRYISLDPVYRKYHHNLITFSMVYHYSEKFILSISHDEVVHGKKSLINKMWGDLWNKYAGLRLYMSYMIGHPGKKLIFMGSEFVQFVEWREYEQLQWQVVDQYESHKQTLHFFKKLNDFYHNETALWQCDYNHHGFRWIDADNSQQSILSFIRSSKDNKQKLIFICNFTPVTYYDYHLGVPDAGSYKEVFNSDNLEFGGSGQVMATEIFSSLQSSHGFEQRITIKIPPMATLVLKLIK.

Asp-318 acts as the Nucleophile in catalysis. Glu-371 acts as the Proton donor in catalysis.

The protein belongs to the glycosyl hydrolase 13 family. GlgB subfamily. As to quaternary structure, monomer.

It carries out the reaction Transfers a segment of a (1-&gt;4)-alpha-D-glucan chain to a primary hydroxy group in a similar glucan chain.. Its pathway is glycan biosynthesis; glycogen biosynthesis. Its function is as follows. Catalyzes the formation of the alpha-1,6-glucosidic linkages in glycogen by scission of a 1,4-alpha-linked oligosaccharide from growing alpha-1,4-glucan chains and the subsequent attachment of the oligosaccharide to the alpha-1,6 position. This chain is 1,4-alpha-glucan branching enzyme GlgB, found in Francisella tularensis subsp. tularensis (strain FSC 198).